The chain runs to 405 residues: 4-hydroxy-3-methylbut-2-enyl diphosphate reductase (405 aa).

Cysteine 66 lines the [4Fe-4S] cluster pocket. Residue histidine 96 coordinates (2E)-4-hydroxy-3-methylbut-2-enyl diphosphate. Position 96 (histidine 96) interacts with dimethylallyl diphosphate. Residue histidine 96 coordinates isopentenyl diphosphate. A [4Fe-4S] cluster-binding site is contributed by cysteine 158. (2E)-4-hydroxy-3-methylbut-2-enyl diphosphate is bound at residue histidine 186. Histidine 186 is a dimethylallyl diphosphate binding site. Histidine 186 contacts isopentenyl diphosphate. Glutamate 188 (proton donor) is an active-site residue. Threonine 251 is a binding site for (2E)-4-hydroxy-3-methylbut-2-enyl diphosphate. [4Fe-4S] cluster is bound at residue cysteine 289. Residues serine 318, serine 319, asparagine 320, and serine 380 each coordinate (2E)-4-hydroxy-3-methylbut-2-enyl diphosphate. Dimethylallyl diphosphate contacts are provided by serine 318, serine 319, asparagine 320, and serine 380. Residues serine 318, serine 319, asparagine 320, and serine 380 each coordinate isopentenyl diphosphate.

The protein belongs to the IspH family. The cofactor is [4Fe-4S] cluster.

It carries out the reaction isopentenyl diphosphate + 2 oxidized [2Fe-2S]-[ferredoxin] + H2O = (2E)-4-hydroxy-3-methylbut-2-enyl diphosphate + 2 reduced [2Fe-2S]-[ferredoxin] + 2 H(+). The enzyme catalyses dimethylallyl diphosphate + 2 oxidized [2Fe-2S]-[ferredoxin] + H2O = (2E)-4-hydroxy-3-methylbut-2-enyl diphosphate + 2 reduced [2Fe-2S]-[ferredoxin] + 2 H(+). Its pathway is isoprenoid biosynthesis; dimethylallyl diphosphate biosynthesis; dimethylallyl diphosphate from (2E)-4-hydroxy-3-methylbutenyl diphosphate: step 1/1. The protein operates within isoprenoid biosynthesis; isopentenyl diphosphate biosynthesis via DXP pathway; isopentenyl diphosphate from 1-deoxy-D-xylulose 5-phosphate: step 6/6. Catalyzes the conversion of 1-hydroxy-2-methyl-2-(E)-butenyl 4-diphosphate (HMBPP) into a mixture of isopentenyl diphosphate (IPP) and dimethylallyl diphosphate (DMAPP). Acts in the terminal step of the DOXP/MEP pathway for isoprenoid precursor biosynthesis. The chain is 4-hydroxy-3-methylbut-2-enyl diphosphate reductase from Cyanothece sp. (strain PCC 7425 / ATCC 29141).